A 196-amino-acid polypeptide reads, in one-letter code: GTP cyclohydrolase-2 (196 aa).

49 to 53 contributes to the GTP binding site; it reads RVHSE. Zn(2+)-binding residues include Cys-54, Cys-65, and Cys-67. GTP contacts are provided by residues Gln-70, 92–94, and Thr-114; that span reads EGR. Asp-126 functions as the Proton acceptor in the catalytic mechanism. Arg-128 serves as the catalytic Nucleophile. Thr-149 and Lys-154 together coordinate GTP.

Belongs to the GTP cyclohydrolase II family. In terms of assembly, homodimer. Zn(2+) is required as a cofactor.

It catalyses the reaction GTP + 4 H2O = 2,5-diamino-6-hydroxy-4-(5-phosphoribosylamino)-pyrimidine + formate + 2 phosphate + 3 H(+). The protein operates within cofactor biosynthesis; riboflavin biosynthesis; 5-amino-6-(D-ribitylamino)uracil from GTP: step 1/4. Catalyzes the conversion of GTP to 2,5-diamino-6-ribosylamino-4(3H)-pyrimidinone 5'-phosphate (DARP), formate and pyrophosphate. The chain is GTP cyclohydrolase-2 from Escherichia coli O127:H6 (strain E2348/69 / EPEC).